A 235-amino-acid chain; its full sequence is Flagellar L-ring protein (235 aa).

The first 18 residues, 1–18 (MNKIAGTLFLLAGLAMAG), serve as a signal peptide directing secretion. C19 carries N-palmitoyl cysteine lipidation. C19 is lipidated: S-diacylglycerol cysteine.

This sequence belongs to the FlgH family. The basal body constitutes a major portion of the flagellar organelle and consists of four rings (L,P,S, and M) mounted on a central rod.

It is found in the cell outer membrane. Its subcellular location is the bacterial flagellum basal body. Functionally, assembles around the rod to form the L-ring and probably protects the motor/basal body from shearing forces during rotation. In Chelativorans sp. (strain BNC1), this protein is Flagellar L-ring protein.